We begin with the raw amino-acid sequence, 296 residues long: Protease HtpX homolog (296 aa).

2 helical membrane-spanning segments follow: residues Val-14 to Leu-34 and Tyr-39 to Phe-59. His-143 lines the Zn(2+) pocket. Residue Glu-144 is part of the active site. His-147 serves as a coordination point for Zn(2+). The next 2 helical transmembrane spans lie at Ile-158–Phe-178 and Ile-195–Val-215. Glu-224 lines the Zn(2+) pocket.

This sequence belongs to the peptidase M48B family. It depends on Zn(2+) as a cofactor.

Its subcellular location is the cell membrane. The protein is Protease HtpX homolog of Streptococcus agalactiae serotype III (strain NEM316).